A 113-amino-acid chain; its full sequence is Large ribosomal subunit protein bL17 (113 aa).

The protein belongs to the bacterial ribosomal protein bL17 family. In terms of assembly, part of the 50S ribosomal subunit. Contacts protein L32.

The sequence is that of Large ribosomal subunit protein bL17 from Clostridium perfringens (strain ATCC 13124 / DSM 756 / JCM 1290 / NCIMB 6125 / NCTC 8237 / Type A).